The following is a 425-amino-acid chain: Non-structural protein 2 (425 aa).

Positions 29–64 form a coiled coil; that stretch reads VSFDELVALREENAKLKQENEALKAKLHRLESDWTT.

The protein is Non-structural protein 2 (Segment-6) of Banna virus (BAV).